The chain runs to 154 residues: 3-hydroxyacyl-[acyl-carrier-protein] dehydratase FabZ (154 aa).

Residue His-54 is part of the active site.

The protein belongs to the thioester dehydratase family. FabZ subfamily.

It is found in the cytoplasm. The enzyme catalyses a (3R)-hydroxyacyl-[ACP] = a (2E)-enoyl-[ACP] + H2O. Involved in unsaturated fatty acids biosynthesis. Catalyzes the dehydration of short chain beta-hydroxyacyl-ACPs and long chain saturated and unsaturated beta-hydroxyacyl-ACPs. In Shewanella putrefaciens (strain CN-32 / ATCC BAA-453), this protein is 3-hydroxyacyl-[acyl-carrier-protein] dehydratase FabZ.